The chain runs to 182 residues: Isopentenyl-diphosphate Delta-isomerase (182 aa).

Mn(2+)-binding residues include His25 and His32. One can recognise a Nudix hydrolase domain in the interval 30–164; the sequence is LLHLAFSSWL…PWAFSPWMVM (135 aa). Cys67 is a catalytic residue. A Mn(2+)-binding site is contributed by His69. A Mg(2+)-binding site is contributed by Glu87. Residues Glu114 and Glu116 each coordinate Mn(2+). Glu116 is an active-site residue.

The protein belongs to the IPP isomerase type 1 family. Homodimer. Mg(2+) is required as a cofactor. Mn(2+) serves as cofactor.

It localises to the cytoplasm. It carries out the reaction isopentenyl diphosphate = dimethylallyl diphosphate. It participates in isoprenoid biosynthesis; dimethylallyl diphosphate biosynthesis; dimethylallyl diphosphate from isopentenyl diphosphate: step 1/1. In terms of biological role, catalyzes the 1,3-allylic rearrangement of the homoallylic substrate isopentenyl (IPP) to its highly electrophilic allylic isomer, dimethylallyl diphosphate (DMAPP). The chain is Isopentenyl-diphosphate Delta-isomerase from Escherichia coli (strain SMS-3-5 / SECEC).